We begin with the raw amino-acid sequence, 558 residues long: Glypican-1 (558 aa).

Residues 1–23 (MELRARGWWLLCAAAALVACARG) form the signal peptide. 7 disulfides stabilise this stretch: C32–C68, C62–C256, C69–C259, C191–C343, C246–C279, C268–C415, and C272–C401. N-linked (GlcNAc...) asparagine glycans are attached at residues N79 and N116. The segment at 341–374 (QGCGNPKVNPQGPGPEEKRRRGKLAPRERPPSGT) is disordered. The segment covering 355 to 370 (PEEKRRRGKLAPRERP) has biased composition (basic and acidic residues). O-linked (Xyl...) (heparan sulfate) serine glycans are attached at residues S486, S488, and S490. The tract at residues 505 to 534 (RKSSSSRTPLTHALPGLSEQEGQKTSAASC) is disordered. A lipid anchor (GPI-anchor amidated serine) is attached at S530. The propeptide at 531–558 (AASCPQPPTFLLPLLLFLALTVARPRWR) is removed in mature form.

It belongs to the glypican family. In terms of processing, S-nitrosylated in a Cu(2+)-dependent manner. Nitric acid (NO) is released from the nitrosylated cysteines by ascorbate or by some other reducing agent, in a Cu(2+) or Zn(2+) dependent manner. This free nitric oxide is then capable of cleaving the heparan sulfate side chains. N- and O-glycosylated. N-glycosylation is mainly of the complex type containing sialic acid. O-glycosylated with heparan sulfate. The heparan sulfate chains can be cleaved either by the action of heparanase or, degraded by a deaminative process that uses nitric oxide (NO) released from the S-nitrosylated cysteines. This process is triggered by ascorbate, or by some other reducing agent, in a Cu(2+)- or Zn(2+) dependent manner. Cu(2+) ions are provided by ceruloproteins such as APP, PRNP or CP which associate with GCP1 in intracellular compartments or lipid rafts. Post-translationally, this cell-associated glypican is further processed to give rise to a medium-released species.

The protein localises to the cell membrane. It localises to the endosome. Its subcellular location is the secreted. The protein resides in the extracellular space. In terms of biological role, cell surface proteoglycan that bears heparan sulfate. Binds, via the heparan sulfate side chains, alpha-4 (V) collagen and participates in Schwann cell myelination. May act as a catalyst in increasing the rate of conversion of prion protein PRPN(C) to PRNP(Sc) via associating (via the heparan sulfate side chains) with both forms of PRPN, targeting them to lipid rafts and facilitating their interaction. Required for proper skeletal muscle differentiation by sequestering FGF2 in lipid rafts preventing its binding to receptors (FGFRs) and inhibiting the FGF-mediated signaling. The protein is Glypican-1 (GPC1) of Homo sapiens (Human).